The following is a 225-amino-acid chain: Uridylate kinase (225 aa).

9 to 10 is an ATP binding site; sequence GS. Position 46 (glycine 46) interacts with UMP. Residues glycine 47 and arginine 51 each coordinate ATP. UMP contacts are provided by residues aspartate 67 and 115 to 121; that span reads THPAHTT. Threonine 141, asparagine 142, tyrosine 147, and aspartate 150 together coordinate ATP.

Belongs to the UMP kinase family. In terms of assembly, homohexamer.

Its subcellular location is the cytoplasm. The catalysed reaction is UMP + ATP = UDP + ADP. The protein operates within pyrimidine metabolism; CTP biosynthesis via de novo pathway; UDP from UMP (UMPK route): step 1/1. Its activity is regulated as follows. Inhibited by UTP. Catalyzes the reversible phosphorylation of UMP to UDP. In Methanococcus maripaludis (strain DSM 14266 / JCM 13030 / NBRC 101832 / S2 / LL), this protein is Uridylate kinase.